Consider the following 122-residue polypeptide: Large ribosomal subunit protein uL14 (122 aa).

It belongs to the universal ribosomal protein uL14 family. Part of the 50S ribosomal subunit. Forms a cluster with proteins L3 and L19. In the 70S ribosome, L14 and L19 interact and together make contacts with the 16S rRNA in bridges B5 and B8.

In terms of biological role, binds to 23S rRNA. Forms part of two intersubunit bridges in the 70S ribosome. This is Large ribosomal subunit protein uL14 from Xylella fastidiosa (strain 9a5c).